Reading from the N-terminus, the 318-residue chain is Glutathione synthetase (318 aa).

Residues 125–311 (EKLFTAWFPE…ITGKLMDAIE (187 aa)) enclose the ATP-grasp domain. 151–208 (FRQEHGDIILKPLDGMGGASIFRVKENDPNVSVIIETLTNHGQNYAMAQTFVPDISNG) is a binding site for ATP. Mg(2+) contacts are provided by glutamate 282 and asparagine 284.

This sequence belongs to the prokaryotic GSH synthase family. Requires Mg(2+) as cofactor. The cofactor is Mn(2+).

It carries out the reaction gamma-L-glutamyl-L-cysteine + glycine + ATP = glutathione + ADP + phosphate + H(+). The protein operates within sulfur metabolism; glutathione biosynthesis; glutathione from L-cysteine and L-glutamate: step 2/2. This Vibrio vulnificus (strain YJ016) protein is Glutathione synthetase.